We begin with the raw amino-acid sequence, 432 residues long: 3-phosphoshikimate 1-carboxyvinyltransferase (432 aa).

The 3-phosphoshikimate site is built by K23, S24, and R28. K23 lines the phosphoenolpyruvate pocket. Residues G95 and R123 each coordinate phosphoenolpyruvate. The 3-phosphoshikimate site is built by S167, Q169, D317, and K344. Q169 contacts phosphoenolpyruvate. The active-site Proton acceptor is D317. Positions 348 and 390 each coordinate phosphoenolpyruvate.

This sequence belongs to the EPSP synthase family. In terms of assembly, monomer.

It is found in the cytoplasm. The enzyme catalyses 3-phosphoshikimate + phosphoenolpyruvate = 5-O-(1-carboxyvinyl)-3-phosphoshikimate + phosphate. Its pathway is metabolic intermediate biosynthesis; chorismate biosynthesis; chorismate from D-erythrose 4-phosphate and phosphoenolpyruvate: step 6/7. Its function is as follows. Catalyzes the transfer of the enolpyruvyl moiety of phosphoenolpyruvate (PEP) to the 5-hydroxyl of shikimate-3-phosphate (S3P) to produce enolpyruvyl shikimate-3-phosphate and inorganic phosphate. This is 3-phosphoshikimate 1-carboxyvinyltransferase from Staphylococcus aureus (strain JH9).